A 75-amino-acid polypeptide reads, in one-letter code: Sec-independent protein translocase protein TatA (75 aa).

The chain crosses the membrane as a helical span at residues 1 to 21 (MGSFSIWHWLIVLVIVALVFG). Residues 44 to 75 (KDANSDKPAEQVTQQKVADDTIDVQAKEKTNS) form a disordered region.

It belongs to the TatA/E family. In terms of assembly, the Tat system comprises two distinct complexes: a TatABC complex, containing multiple copies of TatA, TatB and TatC subunits, and a separate TatA complex, containing only TatA subunits. Substrates initially bind to the TatABC complex, which probably triggers association of the separate TatA complex to form the active translocon.

It localises to the cell inner membrane. In terms of biological role, part of the twin-arginine translocation (Tat) system that transports large folded proteins containing a characteristic twin-arginine motif in their signal peptide across membranes. TatA could form the protein-conducting channel of the Tat system. This is Sec-independent protein translocase protein TatA from Bordetella petrii (strain ATCC BAA-461 / DSM 12804 / CCUG 43448).